Consider the following 404-residue polypeptide: Cysteine desulfurase IscS (404 aa).

Pyridoxal 5'-phosphate-binding positions include 75–76, Asn155, Gln183, and 203–205; these read AT and SGH. Residue Lys206 is modified to N6-(pyridoxal phosphate)lysine. Thr243 provides a ligand contact to pyridoxal 5'-phosphate. Cys328 (cysteine persulfide intermediate) is an active-site residue. Cys328 serves as a coordination point for [2Fe-2S] cluster.

This sequence belongs to the class-V pyridoxal-phosphate-dependent aminotransferase family. NifS/IscS subfamily. As to quaternary structure, homodimer. Forms a heterotetramer with IscU, interacts with other sulfur acceptors. It depends on pyridoxal 5'-phosphate as a cofactor.

Its subcellular location is the cytoplasm. It carries out the reaction (sulfur carrier)-H + L-cysteine = (sulfur carrier)-SH + L-alanine. Its pathway is cofactor biosynthesis; iron-sulfur cluster biosynthesis. In terms of biological role, master enzyme that delivers sulfur to a number of partners involved in Fe-S cluster assembly, tRNA modification or cofactor biosynthesis. Catalyzes the removal of elemental sulfur atoms from cysteine to produce alanine. Functions as a sulfur delivery protein for Fe-S cluster synthesis onto IscU, an Fe-S scaffold assembly protein, as well as other S acceptor proteins. In Actinobacillus succinogenes (strain ATCC 55618 / DSM 22257 / CCUG 43843 / 130Z), this protein is Cysteine desulfurase IscS.